The primary structure comprises 588 residues: Sulfite reductase [NADPH] hemoprotein beta-component (588 aa).

The [4Fe-4S] cluster site is built by cysteine 443, cysteine 449, cysteine 488, and cysteine 492. Cysteine 492 provides a ligand contact to siroheme.

The protein belongs to the nitrite and sulfite reductase 4Fe-4S domain family. As to quaternary structure, alpha(8)-beta(8). The alpha component is a flavoprotein, the beta component is a hemoprotein. Siroheme is required as a cofactor. Requires [4Fe-4S] cluster as cofactor.

The catalysed reaction is hydrogen sulfide + 3 NADP(+) + 3 H2O = sulfite + 3 NADPH + 4 H(+). It functions in the pathway sulfur metabolism; hydrogen sulfide biosynthesis; hydrogen sulfide from sulfite (NADPH route): step 1/1. Its function is as follows. Component of the sulfite reductase complex that catalyzes the 6-electron reduction of sulfite to sulfide. This is one of several activities required for the biosynthesis of L-cysteine from sulfate. The sequence is that of Sulfite reductase [NADPH] hemoprotein beta-component from Actinobacillus succinogenes (strain ATCC 55618 / DSM 22257 / CCUG 43843 / 130Z).